The primary structure comprises 209 residues: Glutathione S-transferase (209 aa).

The GST N-terminal domain maps to 7–91; sequence FFFFFFFFFS…YLSKKYNISG (85 aa). Residues 62-63, 75-76, Asp109, Lys121, and Thr125 contribute to the glutathione site; these read QV and QS. One can recognise a GST C-terminal domain in the interval 93–209; it reads GELNEFYADM…YIANRKESVY (117 aa).

Belongs to the GST superfamily. In terms of assembly, homodimer. In the absence of ligands two homodimers may interact to form a tetramer.

It carries out the reaction RX + glutathione = an S-substituted glutathione + a halide anion + H(+). In terms of biological role, conjugation of reduced glutathione to a wide number of exogenous and endogenous hydrophobic electrophiles. May also function as a storage protein or ligandin for parasitotoxic ferriprotoporphyrin IX (hemin). The chain is Glutathione S-transferase from Plasmodium yoelii yoelii.